Consider the following 179-residue polypeptide: Adenine phosphoribosyltransferase (179 aa).

Belongs to the purine/pyrimidine phosphoribosyltransferase family. Homodimer.

Its subcellular location is the cytoplasm. The catalysed reaction is AMP + diphosphate = 5-phospho-alpha-D-ribose 1-diphosphate + adenine. The protein operates within purine metabolism; AMP biosynthesis via salvage pathway; AMP from adenine: step 1/1. Its function is as follows. Catalyzes a salvage reaction resulting in the formation of AMP, that is energically less costly than de novo synthesis. The sequence is that of Adenine phosphoribosyltransferase from Methylacidiphilum infernorum (isolate V4) (Methylokorus infernorum (strain V4)).